Reading from the N-terminus, the 257-residue chain is 4-diphosphocytidyl-2-C-methyl-D-erythritol kinase (257 aa).

Residue K8 is part of the active site. 91 to 101 (PMGGGLGGGSA) is a binding site for ATP. Residue D131 is part of the active site.

The protein belongs to the GHMP kinase family. IspE subfamily.

The enzyme catalyses 4-CDP-2-C-methyl-D-erythritol + ATP = 4-CDP-2-C-methyl-D-erythritol 2-phosphate + ADP + H(+). It functions in the pathway isoprenoid biosynthesis; isopentenyl diphosphate biosynthesis via DXP pathway; isopentenyl diphosphate from 1-deoxy-D-xylulose 5-phosphate: step 3/6. Functionally, catalyzes the phosphorylation of the position 2 hydroxy group of 4-diphosphocytidyl-2C-methyl-D-erythritol. The chain is 4-diphosphocytidyl-2-C-methyl-D-erythritol kinase from Petrotoga mobilis (strain DSM 10674 / SJ95).